A 357-amino-acid polypeptide reads, in one-letter code: Peptide chain release factor 1 (357 aa).

Residue glutamine 235 is modified to N5-methylglutamine.

This sequence belongs to the prokaryotic/mitochondrial release factor family. In terms of processing, methylated by PrmC. Methylation increases the termination efficiency of RF1.

Its subcellular location is the cytoplasm. Its function is as follows. Peptide chain release factor 1 directs the termination of translation in response to the peptide chain termination codons UAG and UAA. In Alkaliphilus metalliredigens (strain QYMF), this protein is Peptide chain release factor 1.